We begin with the raw amino-acid sequence, 471 residues long: DENN domain-containing protein 2D (471 aa).

Residues 55–204 (EYLLVVSLKK…AFPAPGKTVT (150 aa)) enclose the uDENN domain. The 134-residue stretch at 226-359 (HLEHVDFSSL…LQDDILDSLG (134 aa)) folds into the cDENN domain. Residues 361 to 445 (GINELKTAEQ…QEAEKSKNPP (85 aa)) enclose the dDENN domain.

In terms of tissue distribution, in bronchial mucosa, mainly expressed in ciliated and basal epithelial cells and weakly in alveolar cells (at protein level). Tends to be down-regulated in lung cancers, immortalized bronchial epithelial cell lines and precancerous lesions.

The protein resides in the cytoplasm. Functionally, guanine nucleotide exchange factor (GEF) which may activate RAB9A and RAB9B. Promotes the exchange of GDP to GTP, converting inactive GDP-bound Rab proteins into their active GTP-bound form. This chain is DENN domain-containing protein 2D (DENND2D), found in Homo sapiens (Human).